The chain runs to 346 residues: Serpentine receptor class gamma-20 (346 aa).

Transmembrane regions (helical) follow at residues 27-47 (VMLS…SAVL), 69-89 (FFVL…IEVL), 106-128 (PFFF…CLAF), 157-177 (ILAP…WNIL), 212-232 (IPCL…LTML), 254-274 (TMLF…LPGI), and 279-299 (LLIS…ALIL).

Belongs to the nematode receptor-like protein srg family.

It is found in the membrane. This is Serpentine receptor class gamma-20 (srg-20) from Caenorhabditis elegans.